Reading from the N-terminus, the 128-residue chain is Large ribosomal subunit protein bL12c (128 aa).

The protein belongs to the bacterial ribosomal protein bL12 family. Homodimer. Part of the ribosomal stalk of the 50S ribosomal subunit. Forms a multimeric L10(L12)X complex, where L10 forms an elongated spine to which 2 to 4 L12 dimers bind in a sequential fashion. Binds GTP-bound translation factors.

The protein localises to the plastid. The protein resides in the chloroplast. Its function is as follows. Forms part of the ribosomal stalk which helps the ribosome interact with GTP-bound translation factors. Is thus essential for accurate translation. The sequence is that of Large ribosomal subunit protein bL12c from Phaeodactylum tricornutum (strain CCAP 1055/1).